The sequence spans 214 residues: ATP phosphoribosyltransferase (214 aa).

It belongs to the ATP phosphoribosyltransferase family. Short subfamily. As to quaternary structure, heteromultimer composed of HisG and HisZ subunits.

The protein resides in the cytoplasm. The catalysed reaction is 1-(5-phospho-beta-D-ribosyl)-ATP + diphosphate = 5-phospho-alpha-D-ribose 1-diphosphate + ATP. The protein operates within amino-acid biosynthesis; L-histidine biosynthesis; L-histidine from 5-phospho-alpha-D-ribose 1-diphosphate: step 1/9. Functionally, catalyzes the condensation of ATP and 5-phosphoribose 1-diphosphate to form N'-(5'-phosphoribosyl)-ATP (PR-ATP). Has a crucial role in the pathway because the rate of histidine biosynthesis seems to be controlled primarily by regulation of HisG enzymatic activity. This is ATP phosphoribosyltransferase from Streptococcus sanguinis (strain SK36).